Reading from the N-terminus, the 194-residue chain is MKNIILASASERRQELLKRILEDFQIIVSDFDESSIPFKDNIPSYVMNLAEGKARSVSKKIMDQDSNLVIGCDTLVAFNNKVLGKPKDKKDAFEMLQALSGNEHEVYSGLAILDVKSNKIITDFVCTKVKFSKLTSLQIEKYINTGDPMDKAGAYGIQGKAGVFVENINGCYYNVVGLPLNKLNSMLMEMGVNL.

Aspartate 73 serves as the catalytic Proton acceptor.

It belongs to the Maf family. YhdE subfamily. It depends on a divalent metal cation as a cofactor.

The protein resides in the cytoplasm. The catalysed reaction is dTTP + H2O = dTMP + diphosphate + H(+). It catalyses the reaction UTP + H2O = UMP + diphosphate + H(+). Nucleoside triphosphate pyrophosphatase that hydrolyzes dTTP and UTP. May have a dual role in cell division arrest and in preventing the incorporation of modified nucleotides into cellular nucleic acids. The sequence is that of dTTP/UTP pyrophosphatase from Clostridium botulinum (strain 657 / Type Ba4).